The primary structure comprises 365 residues: UDP-N-acetylglucosamine--N-acetylmuramyl-(pentapeptide) pyrophosphoryl-undecaprenol N-acetylglucosamine transferase (365 aa).

UDP-N-acetyl-alpha-D-glucosamine-binding positions include 10–12 (TGG), N124, R165, S193, I248, and Q293.

Belongs to the glycosyltransferase 28 family. MurG subfamily.

It is found in the cell inner membrane. The enzyme catalyses di-trans,octa-cis-undecaprenyl diphospho-N-acetyl-alpha-D-muramoyl-L-alanyl-D-glutamyl-meso-2,6-diaminopimeloyl-D-alanyl-D-alanine + UDP-N-acetyl-alpha-D-glucosamine = di-trans,octa-cis-undecaprenyl diphospho-[N-acetyl-alpha-D-glucosaminyl-(1-&gt;4)]-N-acetyl-alpha-D-muramoyl-L-alanyl-D-glutamyl-meso-2,6-diaminopimeloyl-D-alanyl-D-alanine + UDP + H(+). It participates in cell wall biogenesis; peptidoglycan biosynthesis. Cell wall formation. Catalyzes the transfer of a GlcNAc subunit on undecaprenyl-pyrophosphoryl-MurNAc-pentapeptide (lipid intermediate I) to form undecaprenyl-pyrophosphoryl-MurNAc-(pentapeptide)GlcNAc (lipid intermediate II). This chain is UDP-N-acetylglucosamine--N-acetylmuramyl-(pentapeptide) pyrophosphoryl-undecaprenol N-acetylglucosamine transferase, found in Geotalea uraniireducens (strain Rf4) (Geobacter uraniireducens).